We begin with the raw amino-acid sequence, 67 residues long: Conotoxin TsMMSK-011 (67 aa).

The first 22 residues, 1-22 (MMSKLGVLLTICLLLFPLTVLP), serve as a signal peptide directing secretion. The propeptide occupies 23-50 (MDGDQPADLPALRTQDIATDQSPWFDPV). Cystine bridges form between C53-C65, C54-C61, and C58-C64. Position 63 is a 4-hydroxyproline (P63).

This sequence belongs to the conotoxin M superfamily. As to expression, expressed by the venom duct.

The protein resides in the secreted. The polypeptide is Conotoxin TsMMSK-011 (Conus tessulatus (Tessellate cone)).